A 464-amino-acid chain; its full sequence is Cell division protein FtsA (464 aa).

Residues 392–464 are disordered; that stretch reads EVIESDKDSE…FKKLMKSLFE (73 aa). The segment covering 416-455 has biased composition (basic and acidic residues); the sequence is KKENDEVAPEAPREESYEDRENHLEDEQQTEGKAKEESKF.

This sequence belongs to the FtsA/MreB family. In terms of assembly, self-interacts. Interacts with FtsZ.

It is found in the cell membrane. Its function is as follows. Cell division protein that is involved in the assembly of the Z ring. May serve as a membrane anchor for the Z ring. This chain is Cell division protein FtsA, found in Staphylococcus epidermidis (strain ATCC 35984 / DSM 28319 / BCRC 17069 / CCUG 31568 / BM 3577 / RP62A).